Reading from the N-terminus, the 227-residue chain is UPF0173 metal-dependent hydrolase BCAH187_A4741 (227 aa).

It belongs to the UPF0173 family.

The sequence is that of UPF0173 metal-dependent hydrolase BCAH187_A4741 from Bacillus cereus (strain AH187).